A 156-amino-acid polypeptide reads, in one-letter code: Small ribosomal subunit protein uS7 (156 aa).

The protein belongs to the universal ribosomal protein uS7 family. Part of the 30S ribosomal subunit. Contacts proteins S9 and S11.

Its function is as follows. One of the primary rRNA binding proteins, it binds directly to 16S rRNA where it nucleates assembly of the head domain of the 30S subunit. Is located at the subunit interface close to the decoding center, probably blocks exit of the E-site tRNA. The sequence is that of Small ribosomal subunit protein uS7 from Acetivibrio thermocellus (strain ATCC 27405 / DSM 1237 / JCM 9322 / NBRC 103400 / NCIMB 10682 / NRRL B-4536 / VPI 7372) (Clostridium thermocellum).